The following is a 241-amino-acid chain: MTHITRLEAPWFLRASKKEYKWTVRASPGPHPLGKSIPLGLLLRDYLAFTSSLKESKKIISDGKVLVDGRVRRDYKYPVGLMDVIAIPHADLYLRIVPDRARLLKPVKISEEESKFKLVRLLNKTLVKGGLLQFNLEDGRNLLISKESTEMFKLPTLTTLKISIPNQEILGVYGFKENVYVMAVGGKNAGIIGQLKRIQTSPYKTRRYSIVVIRSPDGSEYETNLENAMVIGEEKPEVKVE.

Positions 37-99 (IPLGLLLRDY…ADLYLRIVPD (63 aa)) constitute an S4 RNA-binding domain.

It belongs to the eukaryotic ribosomal protein eS4 family.

The sequence is that of Small ribosomal subunit protein eS4 from Metallosphaera sedula (strain ATCC 51363 / DSM 5348 / JCM 9185 / NBRC 15509 / TH2).